Here is a 336-residue protein sequence, read N- to C-terminus: uncharacterized protein (336 aa).

Residues 1–23 form the signal peptide; it reads MKTRHLVYLAFALLGLGLAGLLE. The next 3 helical transmembrane spans lie at 34–54, 75–95, and 106–126; these read LLSL…LLLG, VVVA…LLTT, and VHSL…ALGY. The 112-residue stretch at 144 to 255 folds into the PINc domain; it reads VLDTSVLVDG…MARIYGVKAL (112 aa). D222 is a binding site for Mg(2+). The TRAM domain occupies 267–328; it reads QLQVGDTLKL…IQTQVGRLFF (62 aa).

The protein belongs to the PINc/VapC protein family. Requires Mg(2+) as cofactor.

It localises to the membrane. Functionally, part of a toxin-antitoxin (TA) system. An RNase. This is an uncharacterized protein from Thermus thermophilus (strain ATCC 27634 / DSM 579 / HB8).